The chain runs to 236 residues: Small ribosomal subunit protein uS2c (236 aa).

Belongs to the universal ribosomal protein uS2 family.

Its subcellular location is the plastid. The protein resides in the chloroplast. The polypeptide is Small ribosomal subunit protein uS2c (rps2) (Panax ginseng (Korean ginseng)).